The chain runs to 154 residues: 6,7-dimethyl-8-ribityllumazine synthase (154 aa).

Residues F22, 56-58 (AFE), and 80-82 (TVI) contribute to the 5-amino-6-(D-ribitylamino)uracil site. 85-86 (AT) is a binding site for (2S)-2-hydroxy-3-oxobutyl phosphate. Residue H88 is the Proton donor of the active site. F113 provides a ligand contact to 5-amino-6-(D-ribitylamino)uracil. R127 is a (2S)-2-hydroxy-3-oxobutyl phosphate binding site.

This sequence belongs to the DMRL synthase family. As to quaternary structure, forms an icosahedral capsid composed of 60 subunits, arranged as a dodecamer of pentamers.

It carries out the reaction (2S)-2-hydroxy-3-oxobutyl phosphate + 5-amino-6-(D-ribitylamino)uracil = 6,7-dimethyl-8-(1-D-ribityl)lumazine + phosphate + 2 H2O + H(+). The protein operates within cofactor biosynthesis; riboflavin biosynthesis; riboflavin from 2-hydroxy-3-oxobutyl phosphate and 5-amino-6-(D-ribitylamino)uracil: step 1/2. Catalyzes the formation of 6,7-dimethyl-8-ribityllumazine by condensation of 5-amino-6-(D-ribitylamino)uracil with 3,4-dihydroxy-2-butanone 4-phosphate. This is the penultimate step in the biosynthesis of riboflavin. The polypeptide is 6,7-dimethyl-8-ribityllumazine synthase (Bacillus amyloliquefaciens (Bacillus velezensis)).